The sequence spans 612 residues: MAAPEGSGLGEDARLDQETAQWLHWDKNSLTLEAVKRLIAEGNEEELRKCFGARMEFGTAGLRAAMGPGISRMNDLTIIQTTQGFCRYLEKQFSDLKQKGIVISFDARAHPSSGGSSRRFARLAATTFISQGIPVYLFSDITPTPFVPFTVSRLKLCAGIMITASHNPKQDNGYKVYWDNGAQIISPHDKGISQAIEENLEPWPQAWDDSLIDSSPLLHNPSASINNDYFEDLKKYCFHRSVNRETKVKFVHTSVHGVGHSFVQSAFKAFDLVPPEAVPEQKDPDPEFPTVKYPNPEEGKGVLTLSFALADKTKARIVLANDPDADRLAVAEKQDSGEWRVFSGNELGALLGWWLFTSWKEKNQDRSALKDTYMLSSTVSSKILRAIALKEGFHFEETLTGFKWMGNRAKQLIDQGKTVLFAFEEAIGYMCCPFVLDKDGVSAAVISAELASFLATKNLSLSQQLKAIYVEYGYHITKASYFICHDQDTIKKLFENLRSYDGKNNYPKACGKFEISAIRDLTTGYDDNQPDKKAVLPTSKSSQMITFTFANGGVATMRTSGTEPKIKYYAELCAPPGNSDPEQLKKELNELVSAIEEHFFQPQKYNLQPKAD.

Residue Ala-2 is modified to N-acetylalanine. Residues Arg-63 and Ser-165 each coordinate alpha-D-glucose 1,6-bisphosphate. The active-site Phosphoserine intermediate is Ser-165. Mg(2+)-binding residues include Ser-165, Asp-322, Asp-324, and Asp-326. Ser-165 is subject to Phosphoserine. Positions 326, 327, 400, 424, and 438 each coordinate alpha-D-glucose 1,6-bisphosphate.

Belongs to the phosphohexose mutase family. In terms of assembly, monomer. The cofactor is Mg(2+).

It is found in the cytoplasm. The protein resides in the cytosol. The enzyme catalyses alpha-D-ribose 1-phosphate = D-ribose 5-phosphate. It carries out the reaction 2-deoxy-alpha-D-ribose 1-phosphate = 2-deoxy-D-ribose 5-phosphate. The catalysed reaction is alpha-D-glucose 1-phosphate = alpha-D-glucose 6-phosphate. It catalyses the reaction O-phospho-L-seryl-[protein] + alpha-D-glucose 1-phosphate = alpha-D-glucose 1,6-bisphosphate + L-seryl-[protein]. The enzyme catalyses alpha-D-glucose 1,6-bisphosphate + L-seryl-[protein] = O-phospho-L-seryl-[protein] + alpha-D-glucose 6-phosphate. Functionally, catalyzes the conversion of the nucleoside breakdown products ribose-1-phosphate and deoxyribose-1-phosphate to the corresponding 5-phosphopentoses. Catalyzes the reversible isomerization of alpha-D-glucose 1-phosphate to alpha-D-glucose 6-phosphate but with a lower catalytic efficiency. The mechanism proceeds via the intermediate compound alpha-D-glucose 1,6-bisphosphate. In vitro, also has a low glucose 1,6-bisphosphate synthase activity which is most probably not physiologically relevant. This is Phosphopentomutase (PGM2) from Pongo abelii (Sumatran orangutan).